Reading from the N-terminus, the 467-residue chain is Nodulation protein T (467 aa).

The signal sequence occupies residues 1–17 (MRFTRYTTPFFSLLLSG). C18 carries the N-palmitoyl cysteine lipid modification. C18 carries S-diacylglycerol cysteine lipidation.

It belongs to the outer membrane factor (OMF) (TC 1.B.17) family.

It is found in the cell membrane. The sequence is that of Nodulation protein T (nodT) from Rhizobium leguminosarum bv. trifolii.